The sequence spans 398 residues: ATP-dependent RNA helicase eIF4A (398 aa).

Positions aspartate 25–glutamine 53 match the Q motif motif. The 171-residue stretch at isoleucine 56–isoleucine 226 folds into the Helicase ATP-binding domain. Alanine 69–threonine 76 contributes to the ATP binding site. The DEAD box signature appears at aspartate 174–aspartate 177. Residues glycine 237 to isoleucine 398 form the Helicase C-terminal domain.

It belongs to the DEAD box helicase family. eIF4A subfamily. As to quaternary structure, component of the eIF4F complex, which composition varies with external and internal environmental conditions. It is composed of at least eIF4A, eIF4E and eIF4G.

It is found in the cytoplasm. It catalyses the reaction ATP + H2O = ADP + phosphate + H(+). Functionally, ATP-dependent RNA helicase which is a subunit of the eIF4F complex involved in cap recognition and is required for mRNA binding to ribosome. In the current model of translation initiation, eIF4A unwinds RNA secondary structures in the 5'-UTR of mRNAs which is necessary to allow efficient binding of the small ribosomal subunit, and subsequent scanning for the initiator codon. In Neosartorya fischeri (strain ATCC 1020 / DSM 3700 / CBS 544.65 / FGSC A1164 / JCM 1740 / NRRL 181 / WB 181) (Aspergillus fischerianus), this protein is ATP-dependent RNA helicase eIF4A (tif1).